Consider the following 312-residue polypeptide: Ribosomal RNA small subunit methyltransferase H (312 aa).

Residues 32-34 (AGH), Asp-52, Phe-79, Asp-100, and Gln-107 each bind S-adenosyl-L-methionine.

Belongs to the methyltransferase superfamily. RsmH family.

It localises to the cytoplasm. The catalysed reaction is cytidine(1402) in 16S rRNA + S-adenosyl-L-methionine = N(4)-methylcytidine(1402) in 16S rRNA + S-adenosyl-L-homocysteine + H(+). Functionally, specifically methylates the N4 position of cytidine in position 1402 (C1402) of 16S rRNA. This is Ribosomal RNA small subunit methyltransferase H from Listeria monocytogenes serotype 4b (strain CLIP80459).